The primary structure comprises 130 residues: Keratin, high-sulfur matrix protein, IIIA3A (130 aa).

In terms of tissue distribution, wool.

Functionally, the keratin products of mammalian epidermal derivatives such as wool and hair consist of microfibrils embedded in a rigid matrix of other proteins. The matrix proteins include the high-sulfur and high-tyrosine keratins, having molecular weights of 6-20 kDa, whereas the microfibrils contain the larger, low-sulfur keratins (40-56 kDa). This chain is Keratin, high-sulfur matrix protein, IIIA3A, found in Ovis aries (Sheep).